Here is a 446-residue protein sequence, read N- to C-terminus: Probable glycine dehydrogenase (decarboxylating) subunit 1 (446 aa).

It belongs to the GcvP family. N-terminal subunit subfamily. The glycine cleavage system is composed of four proteins: P, T, L and H. In this organism, the P 'protein' is a heterodimer of two subunits.

The catalysed reaction is N(6)-[(R)-lipoyl]-L-lysyl-[glycine-cleavage complex H protein] + glycine + H(+) = N(6)-[(R)-S(8)-aminomethyldihydrolipoyl]-L-lysyl-[glycine-cleavage complex H protein] + CO2. Functionally, the glycine cleavage system catalyzes the degradation of glycine. The P protein binds the alpha-amino group of glycine through its pyridoxal phosphate cofactor; CO(2) is released and the remaining methylamine moiety is then transferred to the lipoamide cofactor of the H protein. This chain is Probable glycine dehydrogenase (decarboxylating) subunit 1, found in Coxiella burnetii (strain CbuK_Q154) (Coxiella burnetii (strain Q154)).